We begin with the raw amino-acid sequence, 421 residues long: N-succinylarginine dihydrolase (421 aa).

Residues 19 to 28, N105, and 132 to 133 contribute to the substrate site; these read AGLSLGNLAS and HR. E167 is an active-site residue. Position 199 (R199) interacts with substrate. Residue H235 is part of the active site. Substrate is bound by residues D237 and N346. C352 serves as the catalytic Nucleophile.

This sequence belongs to the succinylarginine dihydrolase family. Homodimer.

The enzyme catalyses N(2)-succinyl-L-arginine + 2 H2O + 2 H(+) = N(2)-succinyl-L-ornithine + 2 NH4(+) + CO2. It functions in the pathway amino-acid degradation; L-arginine degradation via AST pathway; L-glutamate and succinate from L-arginine: step 2/5. Its function is as follows. Catalyzes the hydrolysis of N(2)-succinylarginine into N(2)-succinylornithine, ammonia and CO(2). The chain is N-succinylarginine dihydrolase from Novosphingobium aromaticivorans (strain ATCC 700278 / DSM 12444 / CCUG 56034 / CIP 105152 / NBRC 16084 / F199).